The following is a 153-amino-acid chain: Neuromedin-S (153 aa).

The signal sequence occupies residues Met-1 to Gly-26. Propeptides lie at residues Ala-27–Arg-69, Phe-70–Arg-105, and Met-106–Arg-108. Asparagine amide is present on Asn-144. A propeptide spanning residues Tyr-147–Gln-153 is cleaved from the precursor.

This sequence belongs to the NmU family.

The protein localises to the secreted. Its function is as follows. Implicated in the regulation of circadian rhythms through autocrine and/or paracrine actions. The polypeptide is Neuromedin-S (Nms) (Mus musculus (Mouse)).